The chain runs to 68 residues: Amphipathic peptide VmCT1 (68 aa).

Residues 1–23 (MKTQFVILIVAVVLLQLISHSEA) form the signal peptide. Position 36 is a phenylalanine amide (phenylalanine 36). Positions 40–68 (GLRNFDDLDDTFEPEMSEADLKYLQDLLR) are excised as a propeptide.

It belongs to the non-disulfide-bridged peptide (NDBP) superfamily. Short antimicrobial peptide (group 4) family. Expressed by the venom gland.

Its subcellular location is the secreted. It is found in the target cell membrane. In terms of biological role, cationic amphipathic peptide with antibacterial activities against both Gram-positive and Gram-negative bacteria. Also shows antifungal activities. Is mildly hemolytic against human erythrocytes. In addition, when tested in vitro on the parasite Trypanosoma cruzi (responsible of the Chagas disease), is able to reduce the number of the three forms (epimastigote, trypomastigote and amastigote). Also shows antiplasmodial and cytotoxic activity (tested on Plasmodium gallinaceum, and MCF-7 breast cancer cell line). The polypeptide is Amphipathic peptide VmCT1 (Vaejovis mexicanus smithi (Mexican scorpion)).